The primary structure comprises 101 residues: Large ribosomal subunit protein uL23 (101 aa).

Belongs to the universal ribosomal protein uL23 family. Part of the 50S ribosomal subunit. Contacts protein L29, and trigger factor when it is bound to the ribosome.

In terms of biological role, one of the early assembly proteins it binds 23S rRNA. One of the proteins that surrounds the polypeptide exit tunnel on the outside of the ribosome. Forms the main docking site for trigger factor binding to the ribosome. The sequence is that of Large ribosomal subunit protein uL23 from Corynebacterium glutamicum (strain R).